Here is a 173-residue protein sequence, read N- to C-terminus: Shikimate kinase 1 (173 aa).

14–19 (GAGKST) contacts ATP. Mg(2+) is bound at residue Ser18. Residues Asp36, Arg60, and Gly82 each coordinate substrate. Arg120 contributes to the ATP binding site. Arg140 contributes to the substrate binding site. ATP is bound at residue Gln157.

It belongs to the shikimate kinase family. Monomer. Mg(2+) is required as a cofactor.

It localises to the cytoplasm. It carries out the reaction shikimate + ATP = 3-phosphoshikimate + ADP + H(+). It functions in the pathway metabolic intermediate biosynthesis; chorismate biosynthesis; chorismate from D-erythrose 4-phosphate and phosphoenolpyruvate: step 5/7. Its function is as follows. Catalyzes the specific phosphorylation of the 3-hydroxyl group of shikimic acid using ATP as a cosubstrate. This Shigella boydii serotype 18 (strain CDC 3083-94 / BS512) protein is Shikimate kinase 1.